The primary structure comprises 102 residues: Small ribosomal subunit protein uS10 (102 aa).

It belongs to the universal ribosomal protein uS10 family. As to quaternary structure, part of the 30S ribosomal subunit.

In terms of biological role, involved in the binding of tRNA to the ribosomes. This chain is Small ribosomal subunit protein uS10, found in Micrococcus luteus (strain ATCC 4698 / DSM 20030 / JCM 1464 / CCM 169 / CCUG 5858 / IAM 1056 / NBRC 3333 / NCIMB 9278 / NCTC 2665 / VKM Ac-2230) (Micrococcus lysodeikticus).